A 363-amino-acid chain; its full sequence is Flagellar P-ring protein (363 aa).

Positions 1-20 (MKLKLILAVAMLAFSLPSQA) are cleaved as a signal peptide.

Belongs to the FlgI family. In terms of assembly, the basal body constitutes a major portion of the flagellar organelle and consists of four rings (L,P,S, and M) mounted on a central rod.

The protein resides in the periplasm. The protein localises to the bacterial flagellum basal body. Its function is as follows. Assembles around the rod to form the L-ring and probably protects the motor/basal body from shearing forces during rotation. The polypeptide is Flagellar P-ring protein (Shewanella sp. (strain MR-4)).